Here is a 242-residue protein sequence, read N- to C-terminus: GATA zinc finger domain-containing protein 1 (242 aa).

The GATA-type zinc finger occupies 9–33; that stretch reads CAVCKTQSSSMWKKGNQGEILCNGC. Residues 44–85 are disordered; it reads GASASSTIQQNNGGGKQSKQEIHRRSARLRSTKYKAPASEKK. A compositionally biased stretch (low complexity) spans 45 to 54; sequence ASASSTIQQN.

It is found in the nucleus. Its function is as follows. Component of some chromatin complex recruited to chromatin sites methylated 'Lys-4' of histone H3 (H3K4me), with a preference for trimethylated form (H3K4me3). This is GATA zinc finger domain-containing protein 1 (gatad1) from Danio rerio (Zebrafish).